A 698-amino-acid chain; its full sequence is Elongation factor G (698 aa).

The tr-type G domain maps to 8-290 (ERYRNIGISA…AVIELLPSPV (283 aa)). GTP contacts are provided by residues 17-24 (AHIDAGKT), 88-92 (DTPGH), and 142-145 (NKMD).

This sequence belongs to the TRAFAC class translation factor GTPase superfamily. Classic translation factor GTPase family. EF-G/EF-2 subfamily.

It localises to the cytoplasm. Catalyzes the GTP-dependent ribosomal translocation step during translation elongation. During this step, the ribosome changes from the pre-translocational (PRE) to the post-translocational (POST) state as the newly formed A-site-bound peptidyl-tRNA and P-site-bound deacylated tRNA move to the P and E sites, respectively. Catalyzes the coordinated movement of the two tRNA molecules, the mRNA and conformational changes in the ribosome. This is Elongation factor G from Aromatoleum aromaticum (strain DSM 19018 / LMG 30748 / EbN1) (Azoarcus sp. (strain EbN1)).